Here is a 318-residue protein sequence, read N- to C-terminus: Transcriptional regulator NovG (318 aa).

Residues 146–156 (VASLRSSSTAG) show a composition bias toward polar residues. Residues 146 to 176 (VASLRSSSTAGTVGRRTGQDGRSRPNDGTDG) form a disordered region. A compositionally biased stretch (basic and acidic residues) spans 162–176 (TGQDGRSRPNDGTDG).

Belongs to the ParB family.

In terms of biological role, transcription regulator that specifically activates expression of genes involved in the novobiocin biosynthesis pathway. Binds 5'-GTTCRACTG(N)(11)CRGTYGAAC-3' DNA sequence. The chain is Transcriptional regulator NovG (novG) from Streptomyces niveus (Streptomyces spheroides).